A 416-amino-acid polypeptide reads, in one-letter code: Gamma-glutamyl phosphate reductase (416 aa).

It belongs to the gamma-glutamyl phosphate reductase family.

Its subcellular location is the cytoplasm. The catalysed reaction is L-glutamate 5-semialdehyde + phosphate + NADP(+) = L-glutamyl 5-phosphate + NADPH + H(+). The protein operates within amino-acid biosynthesis; L-proline biosynthesis; L-glutamate 5-semialdehyde from L-glutamate: step 2/2. Its function is as follows. Catalyzes the NADPH-dependent reduction of L-glutamate 5-phosphate into L-glutamate 5-semialdehyde and phosphate. The product spontaneously undergoes cyclization to form 1-pyrroline-5-carboxylate. The sequence is that of Gamma-glutamyl phosphate reductase from Halalkalibacterium halodurans (strain ATCC BAA-125 / DSM 18197 / FERM 7344 / JCM 9153 / C-125) (Bacillus halodurans).